The following is a 338-amino-acid chain: CDP-paratose 2-epimerase (338 aa).

Substrate is bound at residue Thr-124. Tyr-164 (proton acceptor) is an active-site residue.

It belongs to the NAD(P)-dependent epimerase/dehydratase family. In terms of assembly, homotetramer. It depends on NAD(+) as a cofactor.

The catalysed reaction is CDP-alpha-D-paratose = CDP-3,6-dideoxy-alpha-D-mannose. It functions in the pathway nucleotide-sugar biosynthesis; CDP-3,6-dideoxy-D-mannose biosynthesis; CDP-3,6-dideoxy-D-mannose from CTP and alpha-D-glucose 1-phosphate: step 5/5. Its function is as follows. Catalyzes the isomeration of CDP-paratose to CDP-tyvelose. In Salmonella typhi, this protein is CDP-paratose 2-epimerase (rfbE).